The chain runs to 733 residues: Polyribonucleotide nucleotidyltransferase (733 aa).

2 residues coordinate Mg(2+): aspartate 488 and aspartate 494. Residues 555-614 enclose the KH domain; it reads PRIEMMTIPVEKIREVIGSGGKVIREIVEQTGAKINIEDDGTIKIASPDTKSIETAKSWI. Positions 624 to 692 constitute an S1 motif domain; it reads GTIYQGTVVK…ERGKIRLSMK (69 aa). A disordered region spans residues 698-733; that stretch reads TGKEIPQDDLIKTEKEQNPDEKNKSEKKRHNRKKED. The span at 702 to 721 shows a compositional bias: basic and acidic residues; sequence IPQDDLIKTEKEQNPDEKNK. A compositionally biased stretch (basic residues) spans 722 to 733; the sequence is SEKKRHNRKKED.

Belongs to the polyribonucleotide nucleotidyltransferase family. Mg(2+) serves as cofactor.

Its subcellular location is the cytoplasm. The catalysed reaction is RNA(n+1) + phosphate = RNA(n) + a ribonucleoside 5'-diphosphate. Its function is as follows. Involved in mRNA degradation. Catalyzes the phosphorolysis of single-stranded polyribonucleotides processively in the 3'- to 5'-direction. This chain is Polyribonucleotide nucleotidyltransferase, found in Bartonella bacilliformis (strain ATCC 35685 / KC583 / Herrer 020/F12,63).